A 333-amino-acid polypeptide reads, in one-letter code: Ketol-acid reductoisomerase (NADP(+)) (333 aa).

The KARI N-terminal Rossmann domain maps to 2–182 (AKIFYDSDCN…GASRAGIILT (181 aa)). Residues 25 to 28 (FGSQ), S51, S53, and 83 to 86 (DEKQ) contribute to the NADP(+) site. H108 is a catalytic residue. Residue G134 coordinates NADP(+). Residues 183-328 (TFKEETETDL…KELRKMMPWI (146 aa)) form the KARI C-terminal knotted domain. Mg(2+)-binding residues include D191, E195, E227, and E231. Position 252 (S252) interacts with substrate.

Belongs to the ketol-acid reductoisomerase family. Mg(2+) serves as cofactor.

It carries out the reaction (2R)-2,3-dihydroxy-3-methylbutanoate + NADP(+) = (2S)-2-acetolactate + NADPH + H(+). The enzyme catalyses (2R,3R)-2,3-dihydroxy-3-methylpentanoate + NADP(+) = (S)-2-ethyl-2-hydroxy-3-oxobutanoate + NADPH + H(+). It participates in amino-acid biosynthesis; L-isoleucine biosynthesis; L-isoleucine from 2-oxobutanoate: step 2/4. It functions in the pathway amino-acid biosynthesis; L-valine biosynthesis; L-valine from pyruvate: step 2/4. In terms of biological role, involved in the biosynthesis of branched-chain amino acids (BCAA). Catalyzes an alkyl-migration followed by a ketol-acid reduction of (S)-2-acetolactate (S2AL) to yield (R)-2,3-dihydroxy-isovalerate. In the isomerase reaction, S2AL is rearranged via a Mg-dependent methyl migration to produce 3-hydroxy-3-methyl-2-ketobutyrate (HMKB). In the reductase reaction, this 2-ketoacid undergoes a metal-dependent reduction by NADPH to yield (R)-2,3-dihydroxy-isovalerate. In Caldicellulosiruptor bescii (strain ATCC BAA-1888 / DSM 6725 / KCTC 15123 / Z-1320) (Anaerocellum thermophilum), this protein is Ketol-acid reductoisomerase (NADP(+)).